The following is an 870-amino-acid chain: MVKEKKKADKKGEKSARSPSSLSDNLDFSKQDGNTTRQEMSPAGVPLLGMQLNEVKPKKDRQNVQQNEDASQYEESILTKLIVESYEGEKVRGLYEGEGFAAFQGGCTYRGMFSEGLMHGQGTYIWADGLKYEGDFVKNVPMNHGVYTWPDGSMYEGEVVNGMRNGFGMFKCSTQPVSYIGHWCNGKRHGKGSIYYNQEGTCWYEGDWVQNIKKGWGIRCYKSGNIYEGQWEDNMRHGEGRMRWLTTNEEYTGRWERGIQNGFGTHTWFLKRIRSSQYPLRNEYIGEFVNGYRHGRGKFYYASGAMYDGEWVSNKKHGMGRLTFKNGRVYEGAFSNDHIAGFPDLEVEFISCLDLSSGVAPRLSRSAELIRKLDGSESHSVLGSSIELDLNLLLDMYPETVQPEEKKQVEYAVLRNITELRRIYSFYSSLGCGHSLDNTFLMTKLHFWRFLKDCKFHHHKLTLADMDRILSANNDIPVEEIHSPFTTILLRTFLNYLLHLAYHIYHEEFQKRSPSLFLCFTKLMTENIRPNACQIKGNLFREQQRTLYSMSYMNKCWEIYLAYCRPSAAPPHEPTMKMRHFLWMLKDFKMINKELTAATFMEVIAEDNRFIYDGIDSNFEPELVFLEFFEALLSFAFICVTDQMTKSYTNVPADDVSGNKHETIYTILNQDAQNKSPSAVMSHESDAAHSDSARSSSSKLELSPDVNKIRKSEPKIKKSVSHERVSKMNFKLTGKGITFFSSESKKYERPKDDREEEFNTWVNNTYVFFVNTLFHAYKREEAIKEKIRADRLRSTAQAQQRKMEDDELEARLNIFILREEEAKRHDYEVDITVLKEPADVSSSHLILDPPKEDVTVSPSSKTITSKKKKK.

A compositionally biased stretch (basic and acidic residues) spans 1 to 16; that stretch reads MVKEKKKADKKGEKSA. Residues 1 to 44 form a disordered region; that stretch reads MVKEKKKADKKGEKSARSPSSLSDNLDFSKQDGNTTRQEMSPAG. The span at 17–39 shows a compositional bias: polar residues; sequence RSPSSLSDNLDFSKQDGNTTRQE. MORN repeat units follow at residues 86–108, 109–131, 132–154, 155–177, 179–201, 204–226, 227–249, 251–273, 284–306, and 307–329; these read YEGEKVRGLYEGEGFAAFQGGCT, YRGMFSEGLMHGQGTYIWADGLK, YEGDFVKNVPMNHGVYTWPDGSM, YEGEVVNGMRNGFGMFKCSTQPV, YIGHWCNGKRHGKGSIYYNQEGT, YEGDWVQNIKKGWGIRCYKSGNI, YEGQWEDNMRHGEGRMRWLTTNE, YTGRWERGIQNGFGTHTWFLKRI, YIGEFVNGYRHGRGKFYYASGAM, and YDGEWVSNKKHGMGRLTFKNGRV. The segment at 674 to 704 is disordered; it reads NKSPSAVMSHESDAAHSDSARSSSSKLELSP. Basic and acidic residues predominate over residues 683 to 692; sequence HESDAAHSDS. A compositionally biased stretch (low complexity) spans 693–703; sequence ARSSSSKLELS. Residues 784–811 adopt a coiled-coil conformation; the sequence is KEKIRADRLRSTAQAQQRKMEDDELEAR. The segment at 840–870 is disordered; the sequence is VSSSHLILDPPKEDVTVSPSSKTITSKKKKK.

As to quaternary structure, interacts with RSPH6A. Does not appear to be part of the axonemal radial spoke complexes 1 or 2.

Its subcellular location is the cytoplasm. It is found in the cytoskeleton. The protein localises to the cilium axoneme. It localises to the cell projection. The protein resides in the cilium. Its subcellular location is the flagellum. In terms of biological role, may function as part of the axonemal radial spoke complex 3 (RS3). Radial spoke complexes are important for ciliary motility. The protein is Radial spoke head 10 homolog B2 (RSPH10B2) of Homo sapiens (Human).